Consider the following 535-residue polypeptide: Cytochrome c oxidase subunit 1 (535 aa).

Residues isoleucine 17 to isoleucine 37 form a helical membrane-spanning segment. Ca(2+) is bound by residues glutamate 40, alanine 43, and glycine 45. A run of 6 helical transmembrane segments spans residues valine 58 to glycine 78, phenylalanine 104 to alanine 124, leucine 147 to isoleucine 167, proline 184 to leucine 204, leucine 236 to isoleucine 256, and valine 268 to valine 288. Histidine 63 contributes to the Fe(II)-heme a binding site. Histidine 242 lines the Cu cation pocket. Residues histidine 242 to tyrosine 246 constitute a cross-link (1'-histidyl-3'-tyrosine (His-Tyr)). Position 246 (tyrosine 246) interacts with O2. Cu cation is bound by residues histidine 291 and histidine 292. 2 consecutive transmembrane segments (helical) span residues methionine 311–glycine 331 and methionine 339–leucine 359. 2 residues coordinate Mg(2+): histidine 369 and aspartate 370. 2 helical membrane passes run tyrosine 373 to glycine 393 and isoleucine 413 to glycine 433. Residue histidine 377 coordinates heme a3. Histidine 379 provides a ligand contact to Fe(II)-heme a. Position 442 (proline 442) interacts with Ca(2+). Residues tyrosine 453–isoleucine 473 traverse the membrane as a helical segment.

Belongs to the heme-copper respiratory oxidase family. As to quaternary structure, component of the cytochrome c oxidase (complex IV, CIV), a multisubunit enzyme composed of a catalytic core of 3 subunits and several supernumerary subunits. The complex exists as a monomer or a dimer and forms supercomplexes (SCs) in the inner mitochondrial membrane with ubiquinol-cytochrome c oxidoreductase (cytochrome b-c1 complex, complex III, CIII). The cofactor is heme. It depends on Cu cation as a cofactor.

Its subcellular location is the mitochondrion inner membrane. The enzyme catalyses 4 Fe(II)-[cytochrome c] + O2 + 8 H(+)(in) = 4 Fe(III)-[cytochrome c] + 2 H2O + 4 H(+)(out). It functions in the pathway energy metabolism; oxidative phosphorylation. Functionally, component of the cytochrome c oxidase, the last enzyme in the mitochondrial electron transport chain which drives oxidative phosphorylation. The respiratory chain contains 3 multisubunit complexes succinate dehydrogenase (complex II, CII), ubiquinol-cytochrome c oxidoreductase (cytochrome b-c1 complex, complex III, CIII) and cytochrome c oxidase (complex IV, CIV), that cooperate to transfer electrons derived from NADH and succinate to molecular oxygen, creating an electrochemical gradient over the inner membrane that drives transmembrane transport and the ATP synthase. Cytochrome c oxidase is the component of the respiratory chain that catalyzes the reduction of oxygen to water. Electrons originating from reduced cytochrome c in the intermembrane space (IMS) are transferred via the dinuclear copper A center (CU(A)) of subunit 2 and heme A of subunit 1 to the active site in subunit 1, a binuclear center (BNC) formed by heme A3 and copper B (CU(B)). The BNC reduces molecular oxygen to 2 water molecules using 4 electrons from cytochrome c in the IMS and 4 protons from the mitochondrial matrix. This chain is Cytochrome c oxidase subunit 1 (COX1), found in Wickerhamomyces canadensis (Yeast).